We begin with the raw amino-acid sequence, 245 residues long: Probable transcriptional regulatory protein Cbei_4222 (245 aa).

Belongs to the TACO1 family.

It localises to the cytoplasm. The polypeptide is Probable transcriptional regulatory protein Cbei_4222 (Clostridium beijerinckii (strain ATCC 51743 / NCIMB 8052) (Clostridium acetobutylicum)).